Reading from the N-terminus, the 818-residue chain is Adhesion G protein-coupled receptor E5 (818 aa).

The signal sequence occupies residues M1 to T23. At Q24 to T533 the chain is on the extracellular side. The 42-residue stretch at E27–E68 folds into the EGF-like 1 domain. 12 disulfide bridges follow: C31–C41, C35–C47, C49–C67, C73–C86, C80–C95, C97–C118, C169–C182, C176–C191, C193–C212, C218–C231, C225–C240, and C242–C260. A glycan (N-linked (GlcNAc...) asparagine) is linked at N44. An EGF-like 2; calcium-binding domain is found at D69–Q119. N112 carries N-linked (GlcNAc...) asparagine glycosylation. One can recognise an EGF-like 3; calcium-binding domain in the interval D165–E213. The EGF-like 4; calcium-binding domain occupies D214–Q261. N-linked (GlcNAc...) asparagine glycosylation occurs at N227. 2 N-linked (GlcNAc...) asparagine glycosylation sites follow: N299 and N395. The GAIN-B domain occupies P347–Q525. S425 bears the Phosphoserine mark. N-linked (GlcNAc...) asparagine glycans are attached at residues N461 and N502. Disulfide bonds link C482–C507 and C499–C509. The interval C482–Q525 is GPS. A helical transmembrane segment spans residues K534 to V554. The Cytoplasmic portion of the chain corresponds to K555 to T562. The chain crosses the membrane as a helical span at residues M563–V583. The Extracellular portion of the chain corresponds to E584–H602. The chain crosses the membrane as a helical span at residues F603 to V623. The Cytoplasmic segment spans residues V624–R637. The helical transmembrane segment at C638–M658 threads the bilayer. Topologically, residues D659–S679 are extracellular. Residues F680–W700 traverse the membrane as a helical segment. At K701–T723 the chain is on the cytoplasmic side. A helical membrane pass occupies residues I724–F744. The Extracellular segment spans residues N745–S752. A helical transmembrane segment spans residues Y753–L773. The Cytoplasmic portion of the chain corresponds to N774–M818. S798 is subject to Phosphoserine. Residues S799 to T808 show a composition bias toward low complexity. The interval S799–M818 is disordered. The residue at position 808 (T808) is a Phosphothreonine. The segment covering R809–M818 has biased composition (polar residues). Residues S814 and S816 each carry the phosphoserine modification.

This sequence belongs to the G-protein coupled receptor 2 family. LN-TM7 subfamily. As to quaternary structure, forms a heterodimer, consisting of a large extracellular region (alpha subunit) non-covalently linked to a seven-transmembrane moiety (beta subunit). Interacts with complement decay-accelerating factor (DAF). The largest isoform (isoform 1) do not interact with DAF. Also interacts with chondroitin sulfate. In terms of processing, proteolytically cleaved into 2 subunits, an extracellular alpha subunit and a seven-transmembrane subunit. In terms of tissue distribution, although predominantly expressed by cells of the immune system, expressed ubiquitously with particularly high levels of expression in the lung and the thymus gland. In the spleen, expression is detected on most myeloid cells and variable portions of T-cells, B-cells and NK cells. In the bone marrow, expressed in nearly all myeloid cells, whereas little if any expression is found on erythroid cells.

Its subcellular location is the cell membrane. It is found in the secreted. The protein localises to the extracellular space. In terms of biological role, receptor potentially involved in both adhesion and signaling processes early after leukocyte activation. Plays an essential role in leukocyte migration. The polypeptide is Adhesion G protein-coupled receptor E5 (Mus musculus (Mouse)).